A 555-amino-acid polypeptide reads, in one-letter code: Glutamine--tRNA ligase (555 aa).

Positions 35 to 45 match the 'HIGH' region motif; sequence PEPNGYLHIGH. ATP-binding positions include 36 to 38 and 42 to 48; these read EPN and HIGHAKS. L-glutamine-binding residues include D68 and Y213. Residues T232, 262–263, and 270–272 contribute to the ATP site; these read RL and MSK. The 'KMSKS' region signature appears at 269–273; it reads VMSKR.

This sequence belongs to the class-I aminoacyl-tRNA synthetase family. As to quaternary structure, monomer.

Its subcellular location is the cytoplasm. It carries out the reaction tRNA(Gln) + L-glutamine + ATP = L-glutaminyl-tRNA(Gln) + AMP + diphosphate. The protein is Glutamine--tRNA ligase of Photobacterium profundum (strain SS9).